Consider the following 239-residue polypeptide: Probable transcriptional regulatory protein Pnuc_0618 (239 aa).

The tract at residues 1–21 is disordered; that stretch reads MAGHSKWANIQHRKGRQDEKR.

This sequence belongs to the TACO1 family.

It is found in the cytoplasm. This is Probable transcriptional regulatory protein Pnuc_0618 from Polynucleobacter asymbioticus (strain DSM 18221 / CIP 109841 / QLW-P1DMWA-1) (Polynucleobacter necessarius subsp. asymbioticus).